The sequence spans 49 residues: Large ribosomal subunit protein bL33B (49 aa).

Belongs to the bacterial ribosomal protein bL33 family.

This chain is Large ribosomal subunit protein bL33B, found in Bacillus cytotoxicus (strain DSM 22905 / CIP 110041 / 391-98 / NVH 391-98).